Consider the following 354-residue polypeptide: Opsin-1, short-wave-sensitive 2 (354 aa).

The Extracellular portion of the chain corresponds to 1-43; sequence MKQQQQTPELFEDFHMPITLDVSNISAYSPFLVPQDHLGHSGV. An N-linked (GlcNAc...) asparagine glycan is attached at Asn-24. A helical transmembrane segment spans residues 44 to 68; the sequence is FMGMSAFMLFLFIAGTAINVLTIVC. Topologically, residues 69–80 are cytoplasmic; the sequence is TIQYKKLRSHLN. A helical transmembrane segment spans residues 81–106; it reads YILVNLAISNLWVSVFGSSVAFYAFY. At 107 to 120 the chain is on the extracellular side; it reads KKYFVFGPIGCKIE. Residues Cys-117 and Cys-194 are joined by a disulfide bond. The helical transmembrane segment at 121 to 140 threads the bilayer; that stretch reads GFTSTIGGMVSLWSLAVVAL. At 141-159 the chain is on the cytoplasmic side; that stretch reads ERWLVICKPLGNFTFKTPH. A helical transmembrane segment spans residues 160–183; the sequence is AIAGCILPWCMALAAGLPPLLGWS. At 184–209 the chain is on the extracellular side; it reads RYIPEGLQCSCGPDWYTTNNKFNNES. An N-linked (GlcNAc...) asparagine glycan is attached at Asn-207. Residues 210 to 237 traverse the membrane as a helical segment; the sequence is YVMFLFCFCFAVPFSTIVFCYGQLLITL. At 238 to 259 the chain is on the cytoplasmic side; sequence KLAAKAQADSASTQKAEREVTK. Residues 260–283 form a helical membrane-spanning segment; sequence MVVVMVFGFLICWGPYAIFAIWVV. Over 284–291 the chain is Extracellular; that stretch reads SNRGAPFD. Residues 292–316 traverse the membrane as a helical segment; the sequence is LRLATIPSCLCKASTVYNPVIYVLM. An N6-(retinylidene)lysine modification is found at Lys-303. The Cytoplasmic segment spans residues 317–354; sequence NKQFRSCMMKMVFNKNIEEDEASSSSQVTQVSSVAPEK.

It belongs to the G-protein coupled receptor 1 family. Opsin subfamily. In terms of processing, phosphorylated on some or all of the serine and threonine residues present in the C-terminal region. Retinal long single cone outer segments.

The protein resides in the membrane. Functionally, visual pigments are the light-absorbing molecules that mediate vision. They consist of an apoprotein, opsin, covalently linked to cis-retinal. In Danio rerio (Zebrafish), this protein is Opsin-1, short-wave-sensitive 2 (opn1sw2).